The sequence spans 153 residues: Cofilin (153 aa).

In terms of domain architecture, ADF-H spans 4–148 (SGATVSQDCI…EYDSILKTVS (145 aa)).

It belongs to the actin-binding proteins ADF family.

Its subcellular location is the cytoplasm. The protein resides in the cytoskeleton. It localises to the nucleus matrix. Functionally, controls reversibly actin polymerization and depolymerization in a pH-sensitive manner. It has the ability to bind G- and F-actin in a 1:1 ratio of cofilin to actin. Binding to F-actin is regulated by tropomyosin. It is the major component of intranuclear and cytoplasmic actin rods. Required for accumulation of actin at the cell division site via depolymerizing actin at the cell ends. In association with myosin II has a role in the assembly of the contractile ring via severing actin filaments. Involved in the maintenance of the contractile ring once formed. In association with profilin and capping protein, has a role in the mitotic reorganization of the actin cytoskeleton. In Gibberella zeae (strain ATCC MYA-4620 / CBS 123657 / FGSC 9075 / NRRL 31084 / PH-1) (Wheat head blight fungus), this protein is Cofilin (COF1).